The sequence spans 591 residues: Alpha-(1-&gt;6)-mannopyranosyltransferase Rv1459c (591 aa).

Transmembrane regions (helical) follow at residues 40-60 (FGATGTVLMAIGALGAGARPV), 80-100 (VSLTMTTTGAVMMALAWLMLG), 117-137 (TLLLWMLPLLIAPPMYSKDVY), 201-221 (IVAAVLCHRLVVLIGVTLIVW), 235-255 (VSALWLGAANPLLIMHLVAGI), 259-279 (ALMLGLMLTGVEFALRGLDMA), 321-341 (EWGPLAMLLAGSILITLSSQV), 367-387 (LLLAAAVMASLTLAIMAILGW), 408-428 (WMSPPTLLALGTGHVGILLGL), 441-461 (AIGVLIITVMVCWLLLAVLRG), 473-493 (LAVTVLLFPVVQPWYLLWAII), 502-522 (PGFRVAAILATLIVGIFGPTA), and 527-547 (FALFQIVDATAASAIIVILLI). The segment at 569–591 (ESASKTPATRRPTAAPDAYADST) is disordered. The segment covering 574–584 (TPATRRPTAAP) has biased composition (low complexity).

This sequence belongs to the MptA/B family.

Its subcellular location is the membrane. In terms of biological role, catalyzes the addition of alpha-(1-&gt;6)-mannose residue. The sequence is that of Alpha-(1-&gt;6)-mannopyranosyltransferase Rv1459c from Mycobacterium tuberculosis (strain ATCC 25618 / H37Rv).